The chain runs to 173 residues: NADH-ubiquinone oxidoreductase chain 6 (173 aa).

The next 5 membrane-spanning stretches (helical) occupy residues 1–21 (MTYF…AVAS), 27–47 (YGVV…LSLG), 48–68 (VSFV…VVFV), 87–107 (VVGY…IGGF), and 139–159 (CGVG…FVVL).

Belongs to the complex I subunit 6 family.

It localises to the mitochondrion membrane. The enzyme catalyses a ubiquinone + NADH + 5 H(+)(in) = a ubiquinol + NAD(+) + 4 H(+)(out). Functionally, core subunit of the mitochondrial membrane respiratory chain NADH dehydrogenase (Complex I) that is believed to belong to the minimal assembly required for catalysis. Complex I functions in the transfer of electrons from NADH to the respiratory chain. The immediate electron acceptor for the enzyme is believed to be ubiquinone. The protein is NADH-ubiquinone oxidoreductase chain 6 (MT-ND6) of Cepphus columba (Pigeon guillemot).